The following is a 113-amino-acid chain: Nucleoid-associated protein Syncc9605_0027 (113 aa).

This sequence belongs to the YbaB/EbfC family. Homodimer.

It localises to the cytoplasm. The protein localises to the nucleoid. Functionally, binds to DNA and alters its conformation. May be involved in regulation of gene expression, nucleoid organization and DNA protection. The polypeptide is Nucleoid-associated protein Syncc9605_0027 (Synechococcus sp. (strain CC9605)).